The sequence spans 249 residues: Aquaporin SIP2-1 (249 aa).

Helical transmembrane passes span 12 to 32 (PWLV…GALV) and 53 to 73 (VSLS…SGGA). Residues 76 to 78 (NPL) carry the NPA 1 motif. The next 4 helical transmembrane spans lie at 104-124 (AQVI…PNVG), 133-155 (AHHG…VTLK), 176-196 (IHLL…AFAW), and 210-230 (LVYW…VTFF). Residues 189–191 (NPA) carry the NPA 2 motif.

The protein belongs to the MIP/aquaporin (TC 1.A.8) family. SIP (TC 1.A.8.10) subfamily.

The protein resides in the membrane. In terms of biological role, aquaporins facilitate the transport of water and small neutral solutes across cell membranes. The chain is Aquaporin SIP2-1 (SIP2-1) from Zea mays (Maize).